Here is a 714-residue protein sequence, read N- to C-terminus: BBSome complex member bbs-2 (714 aa).

2 coiled-coil regions span residues 332–361 and 597–627; these read IREF…VEKD and MTEV…DSIA.

As to quaternary structure, part of BBSome complex, that contains at least bbs-1, bbs-2, bbs-4, bbs-5, osm-12, bbs-8/ttc-8 and bbs-9. In terms of tissue distribution, expressed in ciliated cells including amphid and both inner and outer labial neurons of the head and in both phasmid neurons PHA and PHB in the tail at larval stages L1 and L2.

Its subcellular location is the cell projection. It is found in the cilium. It localises to the cytoplasm. The protein resides in the cytoskeleton. The protein localises to the cilium basal body. Its subcellular location is the cilium axoneme. Component of the BBSome complex. The BBSome complex is thought to function as a coat complex required for sorting of specific membrane proteins to the primary cilia. The BBSome complex is required for ciliogenesis but is dispensable for centriolar satellite function. Required for proper BBSome complex assembly and its ciliary localization. Required for cilia biogenesis and both the assembly and movement of intraflagellar transport proteins along the ciliary axoneme. This chain is BBSome complex member bbs-2, found in Caenorhabditis elegans.